Here is a 632-residue protein sequence, read N- to C-terminus: Phosphoglucomutase, chloroplastic (632 aa).

Residues 1-72 (MAMESALTST…PSSPSTSVAQ (72 aa)) constitute a chloroplast transit peptide. Residues R97 and S190 each coordinate alpha-D-glucose 1,6-bisphosphate. S190 acts as the Phosphoserine intermediate in catalysis. Mg(2+) is bound by residues S190, D355, D357, and D359. S190 is subject to Phosphoserine. Alpha-D-glucose 1,6-bisphosphate is bound by residues D359, R360, T423, E442, S444, and K455.

This sequence belongs to the phosphohexose mutase family. As to quaternary structure, monomer. Mg(2+) serves as cofactor.

It is found in the plastid. The protein localises to the chloroplast. The enzyme catalyses alpha-D-glucose 1-phosphate = alpha-D-glucose 6-phosphate. The catalysed reaction is O-phospho-L-seryl-[protein] + alpha-D-glucose 1-phosphate = alpha-D-glucose 1,6-bisphosphate + L-seryl-[protein]. It catalyses the reaction alpha-D-glucose 1,6-bisphosphate + L-seryl-[protein] = O-phospho-L-seryl-[protein] + alpha-D-glucose 6-phosphate. With respect to regulation, inhibited by the Calvin cycle intermediates fructose-1,6-bisphosphate and ribulose-1,5-bisphosphate. Catalyzes the reversible isomerization of alpha-D-glucose 1-phosphate to alpha-D-glucose 6-phosphate. The mechanism proceeds via the intermediate compound alpha-D-glucose 1,6-bisphosphate. This enzyme participates in both the breakdown and synthesis of glucose. Promotes gravitropic responses, negative in shoots but positive in roots, by facilitating starch granules (statoliths) formation. This is Phosphoglucomutase, chloroplastic (PGMP) from Solanum tuberosum (Potato).